The following is a 306-amino-acid chain: Dermonecrotic toxin LiSicTox-alphaIA1a (306 aa).

Positions 1–18 (MLPYIVLVLGCWSVLSQA) are cleaved as a signal peptide. A propeptide spanning residues 19-26 (AQTDDEER) is cleaved from the precursor. The active site involves histidine 38. Residues glutamate 58 and aspartate 60 each contribute to the Mg(2+) site. Residue histidine 74 is the Nucleophile of the active site. Disulfide bonds link cysteine 78/cysteine 84 and cysteine 80/cysteine 223. Aspartate 118 lines the Mg(2+) pocket.

The protein belongs to the arthropod phospholipase D family. Class II subfamily. Class IIa sub-subfamily. It depends on Mg(2+) as a cofactor. In terms of tissue distribution, expressed by the venom gland.

The protein localises to the secreted. The catalysed reaction is an N-(acyl)-sphingosylphosphocholine = an N-(acyl)-sphingosyl-1,3-cyclic phosphate + choline. It carries out the reaction an N-(acyl)-sphingosylphosphoethanolamine = an N-(acyl)-sphingosyl-1,3-cyclic phosphate + ethanolamine. It catalyses the reaction a 1-acyl-sn-glycero-3-phosphocholine = a 1-acyl-sn-glycero-2,3-cyclic phosphate + choline. The enzyme catalyses a 1-acyl-sn-glycero-3-phosphoethanolamine = a 1-acyl-sn-glycero-2,3-cyclic phosphate + ethanolamine. The catalysed reaction is 1-hexadecanoyl-sn-glycero-3-phosphocholine = 1-hexadecanoyl-sn-glycero-2,3-cyclic phosphate + choline. Its activity is regulated as follows. Catalytic activity and hemolysis are inhibited by divalent ion chelators (1,10-phenanthroline, EDTA, and EGTA). Its function is as follows. Dermonecrotic toxins cleave the phosphodiester linkage between the phosphate and headgroup of certain phospholipids (sphingolipid and lysolipid substrates), forming an alcohol (often choline) and a cyclic phosphate. This toxin acts on sphingomyelin (SM) with high activity. It discriminate between the number of carbon atoms in the substrates, since it prefers SM with six carbons in the fatty acid chain (SM6:0) to other SMs (SM12:0 &gt; SM16:0 &gt; SM18:0 &gt; SM2:0 &gt; SM24:0). It also acts on lysophosphatidylcholine (LPC) (LPC16:0 = LPC12:0 &gt; LPC18:0), and lyso-platelet activating factor (LPAF, an alkyl-LPC) but not on phosphatidylcholine (PC). It may also act on ceramide phosphoethanolamine (CPE), lysophosphatidylcholine (LPC) and lysophosphatidylethanolamine (LPE), but not on lysophosphatidylserine (LPS), and lysophosphatidylglycerol (LPG). It acts by transphosphatidylation, releasing exclusively cyclic phosphate products as second products. In vivo, it induces dermonecrosis, vascular permeability, platelet aggregation, inflammatory response, edema and cytotoxicity against renal epithelial cells. It causes direct nephrotoxicity and is directly toxic to liver. It also induces hemolysis in a complement-dependent manner as well as in a complement-independent manner. The hemolysis provoked in a complement-independent manner is composed of several steps. The toxin binds to erythrocyte membranes, hydrolyzes membrane phospholipids (SM and LPC) thus generating metabolism products that cause hemolysis, probably by provoking an increase of calcium inside cells. The calcium influx is due to the opening of L-type calcium channels, since L-type calcium channel blockers inhibit calcium influx. Is lethal to mice when intraperitoneally injected. The chain is Dermonecrotic toxin LiSicTox-alphaIA1a from Loxosceles intermedia (Brown spider).